A 560-amino-acid polypeptide reads, in one-letter code: DNA ligase B (560 aa).

Lys-124 (N6-AMP-lysine intermediate) is an active-site residue.

This sequence belongs to the NAD-dependent DNA ligase family. LigB subfamily.

The enzyme catalyses NAD(+) + (deoxyribonucleotide)n-3'-hydroxyl + 5'-phospho-(deoxyribonucleotide)m = (deoxyribonucleotide)n+m + AMP + beta-nicotinamide D-nucleotide.. In terms of biological role, catalyzes the formation of phosphodiester linkages between 5'-phosphoryl and 3'-hydroxyl groups in double-stranded DNA using NAD as a coenzyme and as the energy source for the reaction. The sequence is that of DNA ligase B from Shigella sonnei (strain Ss046).